We begin with the raw amino-acid sequence, 655 residues long: Acetyl-coenzyme A synthetase (655 aa).

CoA-binding positions include 196–199 (RGGK) and Thr316. ATP is bound by residues 392–394 (GEP), 416–421 (DTWWQT), Asp507, and Arg522. Ser530 is a CoA binding site. Residue Arg533 coordinates ATP. Residues Val544 and Val549 each contribute to the Mg(2+) site. Lys619 bears the N6-acetyllysine mark.

This sequence belongs to the ATP-dependent AMP-binding enzyme family. It depends on Mg(2+) as a cofactor. Acetylated. Deacetylation by the SIR2-homolog deacetylase activates the enzyme.

The catalysed reaction is acetate + ATP + CoA = acetyl-CoA + AMP + diphosphate. In terms of biological role, catalyzes the conversion of acetate into acetyl-CoA (AcCoA), an essential intermediate at the junction of anabolic and catabolic pathways. AcsA undergoes a two-step reaction. In the first half reaction, AcsA combines acetate with ATP to form acetyl-adenylate (AcAMP) intermediate. In the second half reaction, it can then transfer the acetyl group from AcAMP to the sulfhydryl group of CoA, forming the product AcCoA. The polypeptide is Acetyl-coenzyme A synthetase (Thiobacillus denitrificans (strain ATCC 25259 / T1)).